Here is a 226-residue protein sequence, read N- to C-terminus: Endonuclease V (226 aa).

Positions 42 and 110 each coordinate Mg(2+).

Belongs to the endonuclease V family. Mg(2+) serves as cofactor.

It localises to the cytoplasm. It catalyses the reaction Endonucleolytic cleavage at apurinic or apyrimidinic sites to products with a 5'-phosphate.. Functionally, DNA repair enzyme involved in the repair of deaminated bases. Selectively cleaves double-stranded DNA at the second phosphodiester bond 3' to a deoxyinosine leaving behind the intact lesion on the nicked DNA. The sequence is that of Endonuclease V from Thermus thermophilus (strain ATCC BAA-163 / DSM 7039 / HB27).